Reading from the N-terminus, the 179-residue chain is Repressor of phase 1 flagellin gene (179 aa).

Functionally, transcriptional repressor of the FliC phase-1 flagellin. The chain is Repressor of phase 1 flagellin gene (fljA) from Salmonella abony.